The primary structure comprises 495 residues: Probable cytosol aminopeptidase (495 aa).

2 residues coordinate Mn(2+): Lys266 and Asp271. The active site involves Lys278. Mn(2+) is bound by residues Asp289, Asp348, and Glu350. Arg352 is an active-site residue.

Belongs to the peptidase M17 family. Mn(2+) is required as a cofactor.

The protein resides in the cytoplasm. It catalyses the reaction Release of an N-terminal amino acid, Xaa-|-Yaa-, in which Xaa is preferably Leu, but may be other amino acids including Pro although not Arg or Lys, and Yaa may be Pro. Amino acid amides and methyl esters are also readily hydrolyzed, but rates on arylamides are exceedingly low.. It carries out the reaction Release of an N-terminal amino acid, preferentially leucine, but not glutamic or aspartic acids.. Presumably involved in the processing and regular turnover of intracellular proteins. Catalyzes the removal of unsubstituted N-terminal amino acids from various peptides. This is Probable cytosol aminopeptidase from Pseudomonas aeruginosa (strain UCBPP-PA14).